We begin with the raw amino-acid sequence, 259 residues long: 1,2-dihydroxy-1,2-dihydronaphthalene dehydrogenase (259 aa).

8–32 (SITGAGSGIGLELVRSFKSAGYYVS) lines the NAD(+) pocket. S140 contributes to the substrate binding site. Y153 serves as the catalytic Proton acceptor.

The protein belongs to the short-chain dehydrogenases/reductases (SDR) family.

It carries out the reaction (1R,2S)-1,2-dihydronaphthalene-1,2-diol + NAD(+) = naphthalene-1,2-diol + NADH + H(+). It catalyses the reaction cis-1,2-dihydroxy-1,2-dihydrodibenzothiophene + NAD(+) = 1,2-dihydroxydibenzothiophene + NADH + H(+). It functions in the pathway aromatic compound metabolism; naphthalene degradation. Functionally, catalyzes the oxidation of naphthalene dihydrodiol into 1,2-dihydroxynaphthalene. This Pseudomonas putida (Arthrobacter siderocapsulatus) protein is 1,2-dihydroxy-1,2-dihydronaphthalene dehydrogenase (nahB).